The sequence spans 243 residues: Leucinostatins biosynthesis cluster protein S (243 aa).

In terms of biological role, part of the gene cluster that mediates the biosynthesis of the lipopeptide antibiotics leucinostatins that show extensive biological activities, including antimalarial, antiviral, antibacterial, antifungal, and antitumor activities, as well as phytotoxic. The function of lcsS within the leucinostatins biosynthesis has not been identified yet. The polypeptide is Leucinostatins biosynthesis cluster protein S (Purpureocillium lilacinum (Paecilomyces lilacinus)).